A 131-amino-acid chain; its full sequence is Holo-[acyl-carrier-protein] synthase (131 aa).

Positions 8 and 59 each coordinate Mg(2+).

This sequence belongs to the P-Pant transferase superfamily. AcpS family. Requires Mg(2+) as cofactor.

It localises to the cytoplasm. It carries out the reaction apo-[ACP] + CoA = holo-[ACP] + adenosine 3',5'-bisphosphate + H(+). Its function is as follows. Transfers the 4'-phosphopantetheine moiety from coenzyme A to a Ser of acyl-carrier-protein. The chain is Holo-[acyl-carrier-protein] synthase from Rickettsia rickettsii (strain Iowa).